A 386-amino-acid polypeptide reads, in one-letter code: MLVLVINSGSSSLKYQVRDVASHSVLTEGLIEKIGMGNGGEGDGEIEGPRDHAEALEQVDAAIHEVLGDRTLDAVGHRVVHGGERFGEPVLIDNEITRAIERLNPLAPLHNPANVLGIRAIAKKWPDMPQVAVFDTAFHRTLPEHAWRYAVPDSLYTNHGIRRYGFHGTSHEYVSHQAAALLDLPVEEFDGVIAHLGNGASVTAIRGGKSVDTSMGFTPLEGLVMGTRSGDLDPSILVFLGRAGWSTEDIDSLLNRESGLKGLAGNNDMRSVVEASEAGDARAATALAVASYRLAKYIGGYHVAVGGAKALVFTAGIGENSHLFRALVGDKLGALGVELDAGLNSQRSKEPRVISTAASLIPVLVVPTDEERAIAEATAAVVHSAS.

Asn-7 provides a ligand contact to Mg(2+). Lys-14 lines the ATP pocket. Arg-78 is a binding site for substrate. Asp-135 (proton donor/acceptor) is an active-site residue. Residues 195–199, 268–270, and 316–320 contribute to the ATP site; these read HLGNG, DMR, and GIGEN. Glu-370 lines the Mg(2+) pocket.

This sequence belongs to the acetokinase family. In terms of assembly, homodimer. Mg(2+) is required as a cofactor. The cofactor is Mn(2+).

Its subcellular location is the cytoplasm. It carries out the reaction acetate + ATP = acetyl phosphate + ADP. Its pathway is metabolic intermediate biosynthesis; acetyl-CoA biosynthesis; acetyl-CoA from acetate: step 1/2. Functionally, catalyzes the formation of acetyl phosphate from acetate and ATP. Can also catalyze the reverse reaction. The chain is Acetate kinase from Arthrobacter sp. (strain FB24).